A 450-amino-acid chain; its full sequence is Putative gustatory receptor 28a (450 aa).

Residues 1–47 (MAFKLWERFSQADNVFQALRPLTFISLLGLAPFRLNLNPRKEVQTSK) are Cytoplasmic-facing. A helical membrane pass occupies residues 48–68 (FSFFAGIVHFLFFVLCFGISV). The Extracellular segment spans residues 69–87 (KEGDSIIGYFFQTNITRFS). An N-linked (GlcNAc...) asparagine glycan is attached at Asn-82. The helical transmembrane segment at 88–108 (DGTLRLTGILAMSTIFGFAMF) threads the bilayer. Residues 109–138 (KRQRLVSIIQNNIVVDEIFVRLGMKLDYRR) are Cytoplasmic-facing. Residues 139–159 (ILLSSFLISLGMLLFNVIYLC) traverse the membrane as a helical segment. Topologically, residues 160–171 (VSYSLLVSATIS) are extracellular. Residues 172–192 (PSFVTFTTFALPHINISLMVF) form a helical membrane-spanning segment. Residues 193–292 (KFLCTTDLAR…CQTIEEYFTY (100 aa)) lie on the Cytoplasmic side of the membrane. Residues 293-313 (PLLGIIAISFLFILFDDFYIL) form a helical membrane-spanning segment. At 314-329 (EAILNPKRLDVFEADE) the chain is on the extracellular side. The chain crosses the membrane as a helical span at residues 330–350 (FFAFFLMQLIWYIVIIVLIVE). Residues 351-407 (GSSRTILHSSYTAAIVHKILNITDDPELRDRLFRLSLQLSHRKVLFTAAGLFRLDRT) lie on the Cytoplasmic side of the membrane. A helical membrane pass occupies residues 408–424 (LIFTITGAATCYLIILI). Topologically, residues 425 to 450 (QFRFTHHMDDTSSNSTNNLHSIHLGD) are extracellular. N-linked (GlcNAc...) asparagine glycosylation is present at Asn-438.

It belongs to the insect chemoreceptor superfamily. Gustatory receptor (GR) family. Gr2a subfamily. In addition to expression in a large number of taste neurons, Gr28a is also expressed in a few nonchemosensory neurons, including the campaniform sensilla of the wing, leg stretch receptors, and multiple dendritic (MD) neurons in the abdomen. In larvea, is expressed in neurons of the terminal external chemosensory organ, the dorsal external chemosensory organ, as well as in the ventral and posterior pharyngeal sense organ.

Its subcellular location is the cell membrane. Functionally, probable gustatory receptor which mediates acceptance or avoidance behavior, depending on its substrates. Atypical expression also suggests nongustatory roles in the nervous system and tissues involved in proprioception, hygroreception, and other sensory modalities. It is also possible that it has chemosensory roles in the detection of internal ligands. This Drosophila melanogaster (Fruit fly) protein is Putative gustatory receptor 28a (Gr28a).